The chain runs to 274 residues: tRNA-cytidine(32) 2-sulfurtransferase (274 aa).

The short motif at 40–45 is the PP-loop motif element; it reads SGGKDS. Cysteine 115, cysteine 118, and cysteine 206 together coordinate [4Fe-4S] cluster.

The protein belongs to the TtcA family. In terms of assembly, homodimer. Mg(2+) is required as a cofactor. Requires [4Fe-4S] cluster as cofactor.

It localises to the cytoplasm. It carries out the reaction cytidine(32) in tRNA + S-sulfanyl-L-cysteinyl-[cysteine desulfurase] + AH2 + ATP = 2-thiocytidine(32) in tRNA + L-cysteinyl-[cysteine desulfurase] + A + AMP + diphosphate + H(+). The protein operates within tRNA modification. Functionally, catalyzes the ATP-dependent 2-thiolation of cytidine in position 32 of tRNA, to form 2-thiocytidine (s(2)C32). The sulfur atoms are provided by the cysteine/cysteine desulfurase (IscS) system. The sequence is that of tRNA-cytidine(32) 2-sulfurtransferase from Azotobacter vinelandii (strain DJ / ATCC BAA-1303).